We begin with the raw amino-acid sequence, 737 residues long: Autolysin (737 aa).

Residues 1 to 13 show a composition bias toward basic and acidic residues; the sequence is MKKESMSRIERRK. Disordered stretches follow at residues 1-28, 51-132, and 335-360; these read MKKE…KKST, AEAT…TDSS, and PSSG…SGTN. Positions 1–53 are cleaved as a signal peptide; that stretch reads MKKESMSRIERRKAQQRKKTPVQWKKSTTLFSSALIVSSVGTPVALLPVTAEA. Low complexity predominate over residues 67–117; the sequence is PTTETGLVETPTTETTPGTTEQPTTDSSTTTESTTESSKETPTTPSTEQPT. Polar residues predominate over residues 118–132; it reads ADSTTPVESGTTDSS. Residues 339–352 are compositionally biased toward gly residues; sequence GNTGGGTVNPGTGG. Positions 361–404 constitute a LysM 1 domain; sequence TYYTVKSGDTLNKIAAQYGVSVANLRSWNGISGDLIFVGQKLIV. The disordered stretch occupies residues 409-429; the sequence is SGNTGGSGSGGSNNNQSGTNT. Residues 410-419 show a composition bias toward gly residues; the sequence is GNTGGSGSGG. A compositionally biased stretch (low complexity) spans 420 to 429; that stretch reads SNNNQSGTNT. 5 consecutive LysM domains span residues 429–472, 497–540, 565–608, 631–674, and 693–736; these read TYYT…KLIV, TYYT…KIIV, TSYT…TIIV, and KRHT…TLKV.

Belongs to the glycosyl hydrolase 73 family.

The protein localises to the secreted. In terms of biological role, hydrolyzes the cell wall of E.faecalis and M.lysodeikticus. May play an important role in cell wall growth and cell separation. This is Autolysin from Enterococcus faecalis (strain ATCC 700802 / V583).